The following is a 306-amino-acid chain: Porphobilinogen deaminase (306 aa).

Cys-239 bears the S-(dipyrrolylmethanemethyl)cysteine mark.

Belongs to the HMBS family. Monomer. Dipyrromethane is required as a cofactor.

It carries out the reaction 4 porphobilinogen + H2O = hydroxymethylbilane + 4 NH4(+). It functions in the pathway porphyrin-containing compound metabolism; protoporphyrin-IX biosynthesis; coproporphyrinogen-III from 5-aminolevulinate: step 2/4. Its function is as follows. Tetrapolymerization of the monopyrrole PBG into the hydroxymethylbilane pre-uroporphyrinogen in several discrete steps. In Helicobacter pylori (strain HPAG1), this protein is Porphobilinogen deaminase.